The following is a 644-amino-acid chain: Subversion of eukaryotic traffic protein A (644 aa).

A glucosyltransferase region spans residues 1 to 400 (MYKIYSYLGW…FHTLLSQVSD (400 aa)). The tract at residues 401-644 (PVNPTAHELK…EYDNNHGLRI (244 aa)) is ptdIns(3)P-binding and localization domain.

In terms of processing, ubiquitinated and polyubiquitinated when ectopically produced in both yeast and mammalian cells; however it is unsure if this modification occurs during the L.pneumophila infection of host cells.

Its subcellular location is the secreted. Secreted effector that interferes with vesicular trafficking of host cells. Possesses glucohydrolase and mono-O-glucosyltransferase activity by using UDP-glucose as a sugar donor substrate. Is able to glucosylate histones H4 and H3.1 in vitro, but it is unlikely that histones are the natural substrates for SetA. May glycosylate a component of the host cell vesicle trafficking machinery during L.pneumophila infection. Binds with high specificity to phosphatidylinositol 3-phosphate (PtdIns(3)P), (with a dissociation constant value of 809 nM), which guides SetA to the cytosolic leaflet of the early phagosome of the host cell. The sequence is that of Subversion of eukaryotic traffic protein A (setA) from Legionella pneumophila subsp. pneumophila (strain Philadelphia 1 / ATCC 33152 / DSM 7513).